Here is a 262-residue protein sequence, read N- to C-terminus: Phosphonates import ATP-binding protein PhnC (262 aa).

An ABC transporter domain is found at 5-253 (IRVEKLAKTF…RFDHLYRSIN (249 aa)). Residue 37–44 (GPSGSGKS) participates in ATP binding.

This sequence belongs to the ABC transporter superfamily. Phosphonates importer (TC 3.A.1.9.1) family. As to quaternary structure, the complex is composed of two ATP-binding proteins (PhnC), two transmembrane proteins (PhnE) and a solute-binding protein (PhnD).

Its subcellular location is the cell inner membrane. It carries out the reaction phosphonate(out) + ATP + H2O = phosphonate(in) + ADP + phosphate + H(+). Its function is as follows. Part of the ABC transporter complex PhnCDE involved in phosphonates import. Responsible for energy coupling to the transport system. This Escherichia coli O6:H1 (strain CFT073 / ATCC 700928 / UPEC) protein is Phosphonates import ATP-binding protein PhnC.